Here is a 341-residue protein sequence, read N- to C-terminus: Holliday junction branch migration complex subunit RuvB (341 aa).

Residues 1-182 (MTDADPTLRP…FGIPTRLLFY (182 aa)) form a large ATPase domain (RuvB-L) region. ATP-binding positions include Leu-21, Arg-22, Gly-63, Lys-66, Thr-67, Thr-68, 129–131 (EDF), Arg-172, Tyr-182, and Arg-219. Thr-67 contacts Mg(2+). Positions 183–253 (TVDELFEIVS…LADHALTRLG (71 aa)) are small ATPAse domain (RuvB-S). The segment at 256-341 (QLGLDGADRR…RPPGQSDLFG (86 aa)) is head domain (RuvB-H). Residues Arg-292, Arg-311, and Arg-316 each coordinate DNA.

It belongs to the RuvB family. Homohexamer. Forms an RuvA(8)-RuvB(12)-Holliday junction (HJ) complex. HJ DNA is sandwiched between 2 RuvA tetramers; dsDNA enters through RuvA and exits via RuvB. An RuvB hexamer assembles on each DNA strand where it exits the tetramer. Each RuvB hexamer is contacted by two RuvA subunits (via domain III) on 2 adjacent RuvB subunits; this complex drives branch migration. In the full resolvosome a probable DNA-RuvA(4)-RuvB(12)-RuvC(2) complex forms which resolves the HJ.

The protein localises to the cytoplasm. It catalyses the reaction ATP + H2O = ADP + phosphate + H(+). The RuvA-RuvB-RuvC complex processes Holliday junction (HJ) DNA during genetic recombination and DNA repair, while the RuvA-RuvB complex plays an important role in the rescue of blocked DNA replication forks via replication fork reversal (RFR). RuvA specifically binds to HJ cruciform DNA, conferring on it an open structure. The RuvB hexamer acts as an ATP-dependent pump, pulling dsDNA into and through the RuvAB complex. RuvB forms 2 homohexamers on either side of HJ DNA bound by 1 or 2 RuvA tetramers; 4 subunits per hexamer contact DNA at a time. Coordinated motions by a converter formed by DNA-disengaged RuvB subunits stimulates ATP hydrolysis and nucleotide exchange. Immobilization of the converter enables RuvB to convert the ATP-contained energy into a lever motion, pulling 2 nucleotides of DNA out of the RuvA tetramer per ATP hydrolyzed, thus driving DNA branch migration. The RuvB motors rotate together with the DNA substrate, which together with the progressing nucleotide cycle form the mechanistic basis for DNA recombination by continuous HJ branch migration. Branch migration allows RuvC to scan DNA until it finds its consensus sequence, where it cleaves and resolves cruciform DNA. The polypeptide is Holliday junction branch migration complex subunit RuvB (Ruegeria pomeroyi (strain ATCC 700808 / DSM 15171 / DSS-3) (Silicibacter pomeroyi)).